The primary structure comprises 109 residues: Nucleoid-associated protein Ping_2276 (109 aa).

This sequence belongs to the YbaB/EbfC family. In terms of assembly, homodimer.

It is found in the cytoplasm. The protein localises to the nucleoid. Its function is as follows. Binds to DNA and alters its conformation. May be involved in regulation of gene expression, nucleoid organization and DNA protection. This chain is Nucleoid-associated protein Ping_2276, found in Psychromonas ingrahamii (strain DSM 17664 / CCUG 51855 / 37).